The sequence spans 137 residues: Proofreading thioesterase EntH (137 aa).

The Nucleophile or proton acceptor role is filled by Glu-63.

The protein belongs to the thioesterase PaaI family. Homotetramer. Dimer of dimers. Interacts specifically with the aryl carrier protein (ArCP) domain of EntB.

The protein resides in the cytoplasm. It functions in the pathway siderophore biosynthesis; enterobactin biosynthesis. In terms of biological role, required for optimal enterobactin synthesis. Acts as a proofreading enzyme that prevents EntB misacylation by hydrolyzing the thioester bound existing between EntB and wrongly charged molecules. The polypeptide is Proofreading thioesterase EntH (Enterobacter lignolyticus (strain SCF1)).